Reading from the N-terminus, the 229-residue chain is Small ribosomal subunit protein uS3 (229 aa).

One can recognise a KH type-2 domain in the interval 38 to 106 (IREYIENKLF…KVHINVMEVK (69 aa)). Acidic residues predominate over residues 208 to 217 (PEVDENEETK). The tract at residues 208–229 (PEVDENEETKEENKEKSEEKSE) is disordered. Residues 218 to 229 (EENKEKSEEKSE) are compositionally biased toward basic and acidic residues.

The protein belongs to the universal ribosomal protein uS3 family. In terms of assembly, part of the 30S ribosomal subunit. Forms a tight complex with proteins S10 and S14.

In terms of biological role, binds the lower part of the 30S subunit head. Binds mRNA in the 70S ribosome, positioning it for translation. In Natranaerobius thermophilus (strain ATCC BAA-1301 / DSM 18059 / JW/NM-WN-LF), this protein is Small ribosomal subunit protein uS3.